Reading from the N-terminus, the 273-residue chain is Ribosomal RNA small subunit methyltransferase A (273 aa).

S-adenosyl-L-methionine contacts are provided by Asn-18, Leu-20, Gly-45, Glu-66, Asp-91, and Asn-113.

Belongs to the class I-like SAM-binding methyltransferase superfamily. rRNA adenine N(6)-methyltransferase family. RsmA subfamily.

It is found in the cytoplasm. The enzyme catalyses adenosine(1518)/adenosine(1519) in 16S rRNA + 4 S-adenosyl-L-methionine = N(6)-dimethyladenosine(1518)/N(6)-dimethyladenosine(1519) in 16S rRNA + 4 S-adenosyl-L-homocysteine + 4 H(+). Specifically dimethylates two adjacent adenosines (A1518 and A1519) in the loop of a conserved hairpin near the 3'-end of 16S rRNA in the 30S particle. May play a critical role in biogenesis of 30S subunits. This Salmonella agona (strain SL483) protein is Ribosomal RNA small subunit methyltransferase A.